The chain runs to 400 residues: Lysophospholipid transporter LplT (400 aa).

Helical transmembrane passes span 19-39 (VIVA…ATLA), 53-73 (VLQM…GQIA), 91-111 (AGAA…LVGI), 139-159 (LMEA…GVLA), 164-184 (IAAL…NLFI), 195-213 (SWRL…VVLW), 227-247 (LFWG…PVAL), 257-277 (YLNA…AKLV), 281-301 (TVSR…IFSL), 304-324 (ALLP…FFVV), 352-372 (NSAM…GVPA), and 373-393 (VAIG…LWIW).

This sequence belongs to the major facilitator superfamily. LplT (TC 2.A.1.42) family.

It localises to the cell inner membrane. Functionally, catalyzes the facilitated diffusion of 2-acyl-glycero-3-phosphoethanolamine (2-acyl-GPE) into the cell. This Salmonella newport (strain SL254) protein is Lysophospholipid transporter LplT.